Reading from the N-terminus, the 344-residue chain is Transcription factor HRS1 (344 aa).

Positions 88 to 184 (IKDSSTSNEE…DGGGGRKQRR (97 aa)) are disordered. Residues 95 to 104 (NEEEDEEFDD) are compositionally biased toward acidic residues. Basic and acidic residues-rich tracts occupy residues 105–124 (EHGN…KSDW) and 138–178 (LLPK…DGGG). The 61-residue stretch at 178 to 238 (GGRKQRRCWS…HLQKYRLHTR (61 aa)) folds into the HTH myb-type domain. Positions 209–234 (PKQIREFMKVDGLTNDEVKSHLQKYR) form a DNA-binding region, H-T-H motif. Residues 269 to 291 (STGKTTGGATTSSTTTTTGIYGT) are compositionally biased toward low complexity. Residues 269–322 (STGKTTGGATTSSTTTTTGIYGTMAAPPPPQWPSHSNYRPSIIVDEGSGSHSEG) are disordered.

As to expression, expressed in the root hair region and root hair cells.

The protein resides in the nucleus. In terms of biological role, transcription factor involved in nitrate and phosphate signaling in roots. Integrates nitrate and phosphate starvation responses and adaptation of root architecture depending on nutrient availabilities. Acts downstream of the nitrate sensor and transporter NPF6.3/NRT1.1. Represses primary root development in response to phosphate deficiency conditions, only when nitrate is present. Involved in the modulation of primary root and root hair growth in phosphate-deprived environment. May be required for suppressing abscisic acid (ABA) signaling in germinating embryo axis, which promotes the timely germination of seeds. The chain is Transcription factor HRS1 from Arabidopsis thaliana (Mouse-ear cress).